We begin with the raw amino-acid sequence, 235 residues long: Sugar fermentation stimulation protein homolog (235 aa).

The protein belongs to the SfsA family.

The polypeptide is Sugar fermentation stimulation protein homolog (Azotobacter vinelandii (strain DJ / ATCC BAA-1303)).